The chain runs to 75 residues: Large ribosomal subunit protein bL31 (75 aa).

4 residues coordinate Zn(2+): Cys16, Cys18, Cys37, and Cys40.

It belongs to the bacterial ribosomal protein bL31 family. Type A subfamily. In terms of assembly, part of the 50S ribosomal subunit. The cofactor is Zn(2+).

In terms of biological role, binds the 23S rRNA. This Pseudomonas syringae pv. tomato (strain ATCC BAA-871 / DC3000) protein is Large ribosomal subunit protein bL31.